The following is a 931-amino-acid chain: Protocadherin gamma-B2 (931 aa).

An N-terminal signal peptide occupies residues 1 to 30 (MKASSGRCGLVRWLQVLLPFLLSLFPGALP). 6 Cadherin domains span residues 31-133 (VQIR…TPLF), 134-242 (KQTK…PPVF), 243-347 (SQDV…APEV), 348-452 (IVTS…APVF), 453-562 (QQTS…APRV), and 570-675 (DGSA…LPDL). Residues 31-691 (VQIRYSIPEE…SDPQAELQFY (661 aa)) are Extracellular-facing. Residues Asn-419 and Asn-545 are each glycosylated (N-linked (GlcNAc...) asparagine). The chain crosses the membrane as a helical span at residues 692–712 (LVVALALISVLFFLAVILAIS). The Cytoplasmic segment spans residues 713–931 (LRLRRSSRSD…KKKSGKKEKK (219 aa)). 2 disordered regions span residues 814-840 (DWRF…WPNN) and 901-931 (ATLT…KEKK). The segment covering 815–840 (WRFSQAQRPGTSGSQNGDDTGTWPNN) has biased composition (polar residues). Positions 921-931 (NKKKSGKKEKK) are enriched in basic residues.

The protein resides in the cell membrane. Its function is as follows. Potential calcium-dependent cell-adhesion protein. May be involved in the establishment and maintenance of specific neuronal connections in the brain. The protein is Protocadherin gamma-B2 (PCDHGB2) of Pan troglodytes (Chimpanzee).